A 192-amino-acid chain; its full sequence is MGTWILFACLLGAAYSMPLPPHPGHPGYINFSYEVLTPLKWYQNMLRYPYPSYGYEPVGGWLHHQIIPVVSQQSPQNHALQPHHHNPMVPAQQPVVPQQPMMPVPGQHSMTPIQHHQPNLPLPAQQSFQPQPIQPQPHQPLQPQPPVHPIQRLPPQPPLPPIFPMQPLPPVLPDLPLEAWPATDKTKREEVD.

An N-terminal signal peptide occupies residues 1–16 (MGTWILFACLLGAAYS). Residues 73 to 192 (QSPQNHALQP…TDKTKREEVD (120 aa)) form a disordered region. Residues 87–105 (PMVPAQQPVVPQQPMMPVP) are compositionally biased toward low complexity. Positions 108 to 117 (HSMTPIQHHQ) are enriched in polar residues. Positions 132–173 (PIQPQPHQPLQPQPPVHPIQRLPPQPPLPPIFPMQPLPPVLP) are enriched in pro residues.

It belongs to the amelogenin family.

It localises to the secreted. The protein resides in the extracellular space. Its subcellular location is the extracellular matrix. Its function is as follows. Plays a role in the biomineralization of teeth. Seems to regulate the formation of crystallites during the secretory stage of tooth enamel development. Thought to play a major role in the structural organization and mineralization of developing enamel. This Bos taurus (Bovine) protein is Amelogenin, Y isoform (AMELY).